Reading from the N-terminus, the 372-residue chain is Segmentation polarity homeobox protein engrailed (372 aa).

4 disordered regions span residues 1–35 (MAFEDRCSPSQANSPGPVTGRVPAPHAETLAYSPQ), 47–112 (YERG…LQPT), 196–246 (ERLS…QSNP), and 261–286 (DRPSSGPRSRRVKKKAAPEEKRPRTA). Composition is skewed to basic and acidic residues over residues 79–105 (DYYRPETPDVKPHFSREEQRFELDRSR) and 197–215 (RLSRDREPPKSLEQQKRPD). Low complexity predominate over residues 216–244 (SASSIVSSTSSGAVSTCGSSDASSIQSQS). The segment at residues 280-339 (EKRPRTAFSGAQLARLKHEFAENRYLTERRRQSLAAELGLAEAQIKIWFQNKRAKIKKAS) is a DNA-binding region (homeobox).

The protein belongs to the engrailed homeobox family. Expressed in the middle silk gland but not in the posterior silk gland during the fourth molt/fifth intermolt period.

The protein localises to the nucleus. Its function is as follows. This protein might be involved in the compartmentalization of the silk gland. This Bombyx mori (Silk moth) protein is Segmentation polarity homeobox protein engrailed (en).